The following is a 281-amino-acid chain: 18S rRNA (guanine-N(7))-methyltransferase (281 aa).

A compositionally biased stretch (polar residues) spans 212 to 231 (LPKGLTESQDADQASESMFT). The disordered stretch occupies residues 212-281 (LPKGLTESQD…YTGRKRKPRF (70 aa)). The span at 242–256 (RDLVKKSREWVLEKK) shows a compositional bias: basic and acidic residues.

This sequence belongs to the class I-like SAM-binding methyltransferase superfamily. BUD23/WBSCR22 family. As to quaternary structure, heterodimer with TRMT112; this heterodimerization is necessary for the metabolic stability and activity of the catalytic subunit BUD23. Interacts with GRIP1. Post-translationally, may be ubiquitinated and targeted to degradation in response to pro-inflammatory cytokine signaling.

It is found in the nucleus. The protein resides in the nucleoplasm. Its subcellular location is the cytoplasm. It localises to the perinuclear region. It carries out the reaction a guanosine in 18S rRNA + S-adenosyl-L-methionine = an N(7)-methylguanosine in 18S rRNA + S-adenosyl-L-homocysteine. In terms of biological role, S-adenosyl-L-methionine-dependent methyltransferase that specifically methylates the N(7) position of a guanine in 18S rRNA. Requires the methyltransferase adapter protein TRM112 for full rRNA methyltransferase activity. Involved in the pre-rRNA processing steps leading to small-subunit rRNA production independently of its RNA-modifying catalytic activity. Important for biogenesis end export of the 40S ribosomal subunit independent on its methyltransferase activity. Locus-specific steroid receptor coactivator. Potentiates transactivation by glucocorticoid (NR3C1), mineralocorticoid (NR3C2), androgen (AR) and progesterone (PGR) receptors. Required for the maintenance of open chromatin at the TSC22D3/GILZ locus to facilitate NR3C1 loading on the response elements. Required for maintenance of dimethylation on histone H3 'Lys-79' (H3K79me2), although direct histone methyltransferase activity is not observed in vitro. The chain is 18S rRNA (guanine-N(7))-methyltransferase from Mus musculus (Mouse).